Consider the following 411-residue polypeptide: LL-diaminopimelate aminotransferase (411 aa).

The substrate site is built by Tyr-15 and Gly-42. Pyridoxal 5'-phosphate is bound by residues Tyr-72, 108 to 109 (AK), Tyr-132, Asn-188, Tyr-219, and 247 to 249 (SFS). Residues Lys-109, Tyr-132, and Asn-188 each coordinate substrate. Lys-250 carries the post-translational modification N6-(pyridoxal phosphate)lysine. Residues Arg-258 and Asn-293 each coordinate pyridoxal 5'-phosphate. Residues Asn-293 and Arg-389 each coordinate substrate.

It belongs to the class-I pyridoxal-phosphate-dependent aminotransferase family. LL-diaminopimelate aminotransferase subfamily. Homodimer. The cofactor is pyridoxal 5'-phosphate.

It carries out the reaction (2S,6S)-2,6-diaminopimelate + 2-oxoglutarate = (S)-2,3,4,5-tetrahydrodipicolinate + L-glutamate + H2O + H(+). It functions in the pathway amino-acid biosynthesis; L-lysine biosynthesis via DAP pathway; LL-2,6-diaminopimelate from (S)-tetrahydrodipicolinate (aminotransferase route): step 1/1. Functionally, involved in the synthesis of meso-diaminopimelate (m-DAP or DL-DAP), required for both lysine and peptidoglycan biosynthesis. Catalyzes the direct conversion of tetrahydrodipicolinate to LL-diaminopimelate. Is also able to catalyze the reverse reaction in vitro, i.e. the transamination of LL-diaminopimelate with 2-oxoglutarate to produce tetrahydrodipicolinate and glutamate. Can also use m-DAP instead of LL-DAP as the amino-group donor, and oxaloacetate or pyruvate as the amino-group acceptor. In Desulfitobacterium hafniense (strain DSM 10664 / DCB-2), this protein is LL-diaminopimelate aminotransferase.